We begin with the raw amino-acid sequence, 129 residues long: Glycine cleavage system H protein (129 aa).

The 83-residue stretch at 24–106 (SYTVGITEHA…YGEGWFFRVM (83 aa)) folds into the Lipoyl-binding domain. N6-lipoyllysine is present on Lys65.

This sequence belongs to the GcvH family. As to quaternary structure, the glycine cleavage system is composed of four proteins: P, T, L and H. The cofactor is (R)-lipoate.

Its function is as follows. The glycine cleavage system catalyzes the degradation of glycine. The H protein shuttles the methylamine group of glycine from the P protein to the T protein. The protein is Glycine cleavage system H protein of Shewanella putrefaciens (strain CN-32 / ATCC BAA-453).